The following is a 513-amino-acid chain: ATP synthase subunit alpha (513 aa).

Position 169–176 (169–176 (GDRQTGKT)) interacts with ATP.

This sequence belongs to the ATPase alpha/beta chains family. In terms of assembly, F-type ATPases have 2 components, CF(1) - the catalytic core - and CF(0) - the membrane proton channel. CF(1) has five subunits: alpha(3), beta(3), gamma(1), delta(1), epsilon(1). CF(0) has three main subunits: a(1), b(2) and c(9-12). The alpha and beta chains form an alternating ring which encloses part of the gamma chain. CF(1) is attached to CF(0) by a central stalk formed by the gamma and epsilon chains, while a peripheral stalk is formed by the delta and b chains.

The protein localises to the cell inner membrane. It catalyses the reaction ATP + H2O + 4 H(+)(in) = ADP + phosphate + 5 H(+)(out). Its function is as follows. Produces ATP from ADP in the presence of a proton gradient across the membrane. The alpha chain is a regulatory subunit. The chain is ATP synthase subunit alpha from Actinobacillus pleuropneumoniae serotype 7 (strain AP76).